The primary structure comprises 444 residues: MTETERSNESLLEEIENLRVENAKLKNDLCLERSLNNASDLPMSLDEFKRYGRQMIVDETEGLMGQLKLKNASVLVIGAGGLGCPSLPYLAGAGIGKIGIVDNDTVDTSNLHRQVLHDTIKVGMLKSESAKQVLNKLNPHVSVTSYPVRLSNENAFDIFKDYDVILDCTDTPMARYLISDVAVNLGKPVVSASALRTEGQLSIFNFDNVGPCYRCFYPTPPAPTSVSSCQEGGVLGPCVGLVGVAMVVEALKLLLGVYTRENFKPFLLQYSGFPDQTLRKFKMRGRRVDCPACGTGRTVTRESIESGKINYQSFCGSRNYSVLTEDERIDVHKFERDYWNSSKTKPYVLLDVRPSLHYSISHLPNSHNITVNELRDLPADLNNLQSKIPHLSADSEVLVLCRYGNDSQLATRLLKDKFNLKDVKDVKGGFFKYIDEINPSLPKY.

Residues Gly81, Asp102, Ser109 to Arg113, Lys126, and Asp170 to Thr171 contribute to the ATP site. Residues Cys212 and Cys215 each contribute to the Zn(2+) site. The active-site Glycyl thioester intermediate; for adenylyltransferase activity is the Cys229. 2 residues coordinate Zn(2+): Cys290 and Cys293. One can recognise a Rhodanese domain in the interval Lys343–Pro442. Catalysis depends on Cys401, which acts as the Cysteine persulfide intermediate; for sulfurtransferase activity.

This sequence in the N-terminal section; belongs to the HesA/MoeB/ThiF family. UBA4 subfamily. It depends on Zn(2+) as a cofactor.

It localises to the cytoplasm. The protein localises to the cytosol. It participates in tRNA modification; 5-methoxycarbonylmethyl-2-thiouridine-tRNA biosynthesis. In terms of biological role, plays a central role in 2-thiolation of mcm(5)S(2)U at tRNA wobble positions of cytosolic tRNA(Lys), tRNA(Glu) and tRNA(Gln). Acts by mediating the C-terminal thiocarboxylation of sulfur carrier URM1. Its N-terminus first activates URM1 as acyl-adenylate (-COAMP), then the persulfide sulfur on the catalytic cysteine is transferred to URM1 to form thiocarboxylation (-COSH) of its C-terminus. The reaction probably involves hydrogen sulfide that is generated from the persulfide intermediate and that acts as a nucleophile towards URM1. Subsequently, a transient disulfide bond is formed. Does not use thiosulfate as sulfur donor; NFS1 probably acting as a sulfur donor for thiocarboxylation reactions. Prior mcm(5) tRNA modification by the elongator complex is required for 2-thiolation. May also be involved in protein urmylation. The protein is Adenylyltransferase and sulfurtransferase UBA4 of Kluyveromyces lactis (strain ATCC 8585 / CBS 2359 / DSM 70799 / NBRC 1267 / NRRL Y-1140 / WM37) (Yeast).